The sequence spans 367 residues: Nodulation protein NolF (367 aa).

This sequence belongs to the membrane fusion protein (MFP) (TC 8.A.1) family.

Its function is as follows. Involved in the production of Medicago-specific nodulation signal molecule. The protein is Nodulation protein NolF (nolF) of Rhizobium meliloti (strain 1021) (Ensifer meliloti).